A 344-amino-acid chain; its full sequence is Glyceraldehyde-3-phosphate dehydrogenase (344 aa).

NAD(+) contacts are provided by residues 11 to 12 (TI) and Gly-110. 139–141 (SCN) is a D-glyceraldehyde 3-phosphate binding site. The active-site Nucleophile is the Cys-140. Arg-169 contributes to the NAD(+) binding site. 195 to 196 (HG) contacts D-glyceraldehyde 3-phosphate. Residue Gln-302 participates in NAD(+) binding.

It belongs to the glyceraldehyde-3-phosphate dehydrogenase family. Homotetramer.

Its subcellular location is the cytoplasm. The catalysed reaction is D-glyceraldehyde 3-phosphate + phosphate + NADP(+) = (2R)-3-phospho-glyceroyl phosphate + NADPH + H(+). It carries out the reaction D-glyceraldehyde 3-phosphate + phosphate + NAD(+) = (2R)-3-phospho-glyceroyl phosphate + NADH + H(+). The protein operates within carbohydrate degradation; glycolysis; pyruvate from D-glyceraldehyde 3-phosphate: step 1/5. The polypeptide is Glyceraldehyde-3-phosphate dehydrogenase (Pyrobaculum islandicum (strain DSM 4184 / JCM 9189 / GEO3)).